The primary structure comprises 61 residues: U-stichotoxin-Hcr1b (61 aa).

The signal sequence occupies residues 1-19 (PILIFAFVMFAVMVNAKPS). Residues 20 to 31 (IDDAEMKREPKP) constitute a propeptide that is removed on maturation. 2 cysteine pairs are disulfide-bonded: C38–C49 and C41–C56.

It belongs to the Hau1a/HC18/HC19 family.

The protein resides in the secreted. It localises to the nematocyst. Toxin that is lethal to crab. Does not produce the typical symptoms associated with sodium channel toxins in crabs, suggesting that it likely does not act on sodium channels. The protein is U-stichotoxin-Hcr1b of Radianthus crispa (Leathery sea anemone).